A 379-amino-acid polypeptide reads, in one-letter code: Galactose-1-phosphate uridylyltransferase (379 aa).

The tract at residues 1–21 (MSRSGTDPQQRQQASEADAAA) is disordered. The span at 9-21 (QQRQQASEADAAA) shows a compositional bias: low complexity. Cys-75 contributes to the Zn(2+) binding site. Residues Ala-81, 97 to 98 (ND), and Asn-173 each bind UDP-alpha-D-glucose. His-184 contacts Zn(2+). The active-site Tele-UMP-histidine intermediate is His-186. Gln-188 serves as a coordination point for UDP-alpha-D-glucose. Zn(2+) is bound by residues Glu-202, His-301, His-319, and His-321. UDP-alpha-D-glucose-binding positions include 334 to 337 (KFMV) and 339 to 340 (YE).

It belongs to the galactose-1-phosphate uridylyltransferase type 1 family. Homodimer. Zn(2+) serves as cofactor.

It carries out the reaction alpha-D-galactose 1-phosphate + UDP-alpha-D-glucose = alpha-D-glucose 1-phosphate + UDP-alpha-D-galactose. It functions in the pathway carbohydrate metabolism; galactose metabolism. In terms of biological role, plays an important role in galactose metabolism. This is Galactose-1-phosphate uridylyltransferase (GALT) from Homo sapiens (Human).